The sequence spans 150 residues: Large ribosomal subunit protein bL9 (150 aa).

Belongs to the bacterial ribosomal protein bL9 family.

Functionally, binds to the 23S rRNA. The polypeptide is Large ribosomal subunit protein bL9 (Shewanella sp. (strain MR-4)).